A 332-amino-acid chain; its full sequence is Ribosomal RNA small subunit methyltransferase H (332 aa).

S-adenosyl-L-methionine-binding positions include 39–41 (GGY), D56, F83, D100, and Q107.

Belongs to the methyltransferase superfamily. RsmH family.

The protein localises to the cytoplasm. It catalyses the reaction cytidine(1402) in 16S rRNA + S-adenosyl-L-methionine = N(4)-methylcytidine(1402) in 16S rRNA + S-adenosyl-L-homocysteine + H(+). Its function is as follows. Specifically methylates the N4 position of cytidine in position 1402 (C1402) of 16S rRNA. This Bartonella quintana (strain Toulouse) (Rochalimaea quintana) protein is Ribosomal RNA small subunit methyltransferase H.